Here is a 95-residue protein sequence, read N- to C-terminus: Nucleoid-associated protein MARTH_orf159 (95 aa).

It belongs to the YbaB/EbfC family. In terms of assembly, homodimer.

Its subcellular location is the cytoplasm. It is found in the nucleoid. Functionally, binds to DNA and alters its conformation. May be involved in regulation of gene expression, nucleoid organization and DNA protection. In Metamycoplasma arthritidis (strain 158L3-1) (Mycoplasma arthritidis), this protein is Nucleoid-associated protein MARTH_orf159.